A 558-amino-acid chain; its full sequence is Inositol-3-phosphate synthase (558 aa).

Residues 1–34 (MSPTALDACDHHDSFSLPAQDQSKVHPSARRTPE) form a disordered region. The NAD(+) site is built by glycine 99, glycine 100, asparagine 101, asparagine 102, aspartate 174, serine 210, isoleucine 211, glutamine 221, arginine 224, threonine 262, alanine 263, asparagine 264, threonine 265, glycine 313, serine 314, aspartate 338, serine 341, asparagine 372, asparagine 373, aspartate 374, lysine 387, glycine 439, aspartate 440, aspartate 468, and serine 469.

Belongs to the myo-inositol 1-phosphate synthase family. In terms of assembly, homotetramer. The cofactor is NAD(+).

Its subcellular location is the cytoplasm. It catalyses the reaction D-glucose 6-phosphate = 1D-myo-inositol 3-phosphate. It participates in polyol metabolism; myo-inositol biosynthesis; myo-inositol from D-glucose 6-phosphate: step 1/2. Its function is as follows. Key enzyme in myo-inositol biosynthesis pathway that catalyzes the conversion of glucose 6-phosphate to 1-myo-inositol 1-phosphate in a NAD-dependent manner. Rate-limiting enzyme in the synthesis of all inositol-containing compounds. The chain is Inositol-3-phosphate synthase from Cryptococcus neoformans var. grubii serotype A (strain H99 / ATCC 208821 / CBS 10515 / FGSC 9487) (Filobasidiella neoformans var. grubii).